A 131-amino-acid polypeptide reads, in one-letter code: MKLGAYYKGGDLKKPSGGKKRKVRKTKKKALGGGPPQIPKLGENDTRIVERVRGGNLKVRLREAKFANVYIPKERKSVKAKIISIISTPANPDFARRNFIVKGSVIQTEVGKALVTSRPGQDGVINAVLIE.

Residues 1 to 42 (MKLGAYYKGGDLKKPSGGKKRKVRKTKKKALGGGPPQIPKLG) are disordered. Residues 16-30 (SGGKKRKVRKTKKKA) show a composition bias toward basic residues.

Belongs to the eukaryotic ribosomal protein eS8 family. Part of the 30S ribosomal subunit.

The chain is Small ribosomal subunit protein eS8 from Pyrobaculum aerophilum (strain ATCC 51768 / DSM 7523 / JCM 9630 / CIP 104966 / NBRC 100827 / IM2).